The following is a 330-amino-acid chain: PDZ and LIM domain protein 4 (330 aa).

The region spanning Met1–Glu84 is the PDZ domain. Disordered regions lie at residues Asp104 to Thr154 and Glu219 to Ala239. Ser111, Ser115, Ser118, Ser119, Ser124, and Ser134 each carry phosphoserine. A compositionally biased stretch (polar residues) spans Ser111–Gly122. Residues Cys255–His305 form the LIM zinc-binding domain.

In terms of assembly, homodimer. Interacts (via C-terminus only or via combined C-terminus and LIM domain, but not LIM domain only) with PTPN13 (via the second or fourth PDZ domains). Found in a complex with PTPN13 and TRIP6. Interacts (via PDZ domain) with ACTN1 and ACTN2 (via C-terminal SDL residues). Interacts (via PDZ domain) with TRIP6 (via the second LIM domain or via the third LIM domain plus C-terminus). Interacts (via LIM domain) with GRIA1 (via C-terminus); this interaction as well as the interaction with alpha-actinin is required for their colocalization in early endosomes. Interacts with PDLIM1. Forms (via LIM domain) a heterodimer with PDLIM3. Interacts directly with SRC (via kinase domain and to a lesser extent the SH2 domain). Post-translationally, phosphorylated on tyrosine residue(s). Can be dephosphorylated by PTPN13. In terms of tissue distribution, detected in several tissues, most prominent in brain and heart of adults. Expressed in embryonic fibroblasts.

The protein localises to the cytoplasm. It is found in the cytoskeleton. The protein resides in the cell projection. Its subcellular location is the dendritic spine. It localises to the early endosome membrane. The protein localises to the recycling endosome membrane. It is found in the nucleus. The protein resides in the perinuclear region. Its subcellular location is the lamellipodium. It localises to the synapse. The protein localises to the synaptosome. Suppresses SRC activation by recognizing and binding to active SRC and facilitating PTPN13-mediated dephosphorylation of SRC 'Tyr-419' leading to its inactivation. Inactivated SRC dissociates from this protein allowing the initiation of a new SRC inactivation cycle. Involved in reorganization of the actin cytoskeleton. In nonmuscle cells, binds to ACTN1 (alpha-actinin-1), increases the affinity of ACTN1 to F-actin (filamentous actin), and promotes formation of actin stress fibers. Involved in regulation of the synaptic AMPA receptor transport in dendritic spines of hippocampal pyramidal neurons directing the receptors toward an insertion at the postsynaptic membrane. Links endosomal surface-internalized GRIA1-containing AMPA receptors to the alpha-actinin/actin cytoskeleton. Increases AMPA receptor-mediated excitatory postsynaptic currents in neurons. The polypeptide is PDZ and LIM domain protein 4 (Pdlim4) (Rattus norvegicus (Rat)).